A 432-amino-acid polypeptide reads, in one-letter code: uncharacterized protein (432 aa).

The Cytochrome c domain occupies 223–432 (ASAVRGEALF…KDLIEYLKTR (210 aa)). Positions 236, 239, and 240 each coordinate heme c.

This is an uncharacterized protein from Sinorhizobium fredii (strain NBRC 101917 / NGR234).